A 172-amino-acid chain; its full sequence is Large ribosomal subunit protein uL10 (172 aa).

This sequence belongs to the universal ribosomal protein uL10 family. In terms of assembly, part of the ribosomal stalk of the 50S ribosomal subunit. The N-terminus interacts with L11 and the large rRNA to form the base of the stalk. The C-terminus forms an elongated spine to which L12 dimers bind in a sequential fashion forming a multimeric L10(L12)X complex.

Its function is as follows. Forms part of the ribosomal stalk, playing a central role in the interaction of the ribosome with GTP-bound translation factors. This Rhizobium rhizogenes (strain K84 / ATCC BAA-868) (Agrobacterium radiobacter) protein is Large ribosomal subunit protein uL10.